The sequence spans 325 residues: Biotin synthase (325 aa).

Residues 52 to 281 (YQKDDVVLCS…AKPLLICGGR (230 aa)) enclose the Radical SAM core domain. Residues Cys-70, Cys-74, and Cys-77 each coordinate [4Fe-4S] cluster. [2Fe-2S] cluster contacts are provided by Ser-114, Cys-146, and Cys-206.

Belongs to the radical SAM superfamily. Biotin synthase family. Homodimer. The cofactor is [4Fe-4S] cluster. It depends on [2Fe-2S] cluster as a cofactor.

The catalysed reaction is (4R,5S)-dethiobiotin + (sulfur carrier)-SH + 2 reduced [2Fe-2S]-[ferredoxin] + 2 S-adenosyl-L-methionine = (sulfur carrier)-H + biotin + 2 5'-deoxyadenosine + 2 L-methionine + 2 oxidized [2Fe-2S]-[ferredoxin]. It functions in the pathway cofactor biosynthesis; biotin biosynthesis; biotin from 7,8-diaminononanoate: step 2/2. Its function is as follows. Catalyzes the conversion of dethiobiotin (DTB) to biotin by the insertion of a sulfur atom into dethiobiotin via a radical-based mechanism. This chain is Biotin synthase, found in Syntrophus aciditrophicus (strain SB).